The chain runs to 292 residues: 31 kDa ribonucleoprotein, chloroplastic (292 aa).

Positions 88–166 (LKLFVGNLPF…RAIRVNAGPA (79 aa)) constitute an RRM 1 domain. The segment at 165-203 (PAPAKRENSSFGGGRGGNSSYGGGRDGNSSFGGARGGRS) is disordered. The segment at 167–207 (PAKRENSSFGGGRGGNSSYGGGRDGNSSFGGARGGRSVDSS) is linker (Gly-rich). The segment covering 175-190 (FGGGRGGNSSYGGGRD) has biased composition (gly residues). Residues 208-286 (NRVYVGNLSW…RSIRVSAAEE (79 aa)) form the RRM 2 domain.

As to expression, expressed at high levels in the leaves and seedlings, and lower levels are seen in the stems and roots.

The protein resides in the plastid. It localises to the chloroplast. This chain is 31 kDa ribonucleoprotein, chloroplastic, found in Nicotiana plumbaginifolia (Leadwort-leaved tobacco).